The chain runs to 306 residues: 2-dehydro-3-deoxy-D-gluconate/2-dehydro-3-deoxy-phosphogluconate aldolase (306 aa).

Residues 61–62 (TT), 148–150 (YNY), and 173–175 (KDT) each bind substrate. The active-site Schiff-base intermediate with substrate is K173.

This sequence belongs to the DapA family. KDPG aldolase subfamily. In terms of assembly, homotetramer; dimer of dimers.

The enzyme catalyses 2-dehydro-3-deoxy-6-phospho-D-gluconate = D-glyceraldehyde 3-phosphate + pyruvate. It catalyses the reaction 2-dehydro-3-deoxy-D-gluconate = D-glyceraldehyde + pyruvate. Its pathway is carbohydrate acid metabolism; 2-dehydro-3-deoxy-D-gluconate degradation; D-glyceraldehyde 3-phosphate and pyruvate from 2-dehydro-3-deoxy-D-gluconate: step 2/2. Functionally, involved in the degradation of glucose via the Entner-Doudoroff pathway. Catalyzes the reversible cleavage of 2-keto-3-deoxy-6-phosphogluconate (KDPG) and 2-keto-3-deoxygluconate (KDG) forming pyruvate and glyceraldehyde 3-phosphate or glyceraldehyde, respectively. It is not able to use 2-keto-3-deoxy-6-phosphogalactonate (KDPGal) and 2-keto-3-deoxygalactonate (KDGal) as substrate. The protein is 2-dehydro-3-deoxy-D-gluconate/2-dehydro-3-deoxy-phosphogluconate aldolase (kdgA) of Thermoproteus tenax.